We begin with the raw amino-acid sequence, 494 residues long: Alpha-amylase-related protein (494 aa).

The first 20 residues, 1–20 (MFKFALALTLCLAGASLSLA), serve as a signal peptide directing secretion. At Gln-21 the chain carries Pyrrolidone carboxylic acid. An intrachain disulfide couples Cys-48 to Cys-104. Residues Asn-118, Gln-169, and Asp-178 each contribute to the Ca(2+) site. An intrachain disulfide couples Cys-157 to Cys-171. Arg-206 is a chloride binding site. The active-site Nucleophile is the Asp-208. Residue His-212 coordinates Ca(2+). Glu-245 serves as the catalytic Proton donor. Positions 308 and 343 each coordinate chloride. Disulfide bonds link Cys-376/Cys-382, Cys-418/Cys-441, and Cys-448/Cys-460.

This sequence belongs to the glycosyl hydrolase 13 family. In terms of assembly, monomer. Ca(2+) serves as cofactor. Chloride is required as a cofactor.

Its subcellular location is the secreted. The catalysed reaction is Endohydrolysis of (1-&gt;4)-alpha-D-glucosidic linkages in polysaccharides containing three or more (1-&gt;4)-alpha-linked D-glucose units.. The polypeptide is Alpha-amylase-related protein (Amyrel) (Drosophila punjabiensis (Fruit fly)).